Here is a 467-residue protein sequence, read N- to C-terminus: UDP-N-acetylmuramate--L-alanine ligase (467 aa).

An ATP-binding site is contributed by 114 to 120 (GTHGKTT).

It belongs to the MurCDEF family.

Its subcellular location is the cytoplasm. It carries out the reaction UDP-N-acetyl-alpha-D-muramate + L-alanine + ATP = UDP-N-acetyl-alpha-D-muramoyl-L-alanine + ADP + phosphate + H(+). It functions in the pathway cell wall biogenesis; peptidoglycan biosynthesis. Its function is as follows. Cell wall formation. This Rhodopseudomonas palustris (strain BisA53) protein is UDP-N-acetylmuramate--L-alanine ligase.